Reading from the N-terminus, the 335-residue chain is Galactinol synthase 2 (335 aa).

The active site involves Lys103. Residues Asp119, Asp121, and His257 each contribute to the Mn(2+) site.

The protein belongs to the glycosyltransferase 8 family. Galactosyltransferase subfamily. A divalent metal cation is required as a cofactor. In terms of tissue distribution, accumulates in mature seeds.

The protein resides in the cytoplasm. It carries out the reaction myo-inositol + UDP-alpha-D-galactose = alpha-D-galactosyl-(1-&gt;3)-1D-myo-inositol + UDP + H(+). Its function is as follows. Galactinol synthase involved in the biosynthesis of raffinose family oligosaccharides (RFOs) that function as osmoprotectants. Promotes stress tolerance of factors such as drought, chilling, salinity and methylviologen (MV), a superoxide radical generating drug, by mediating an increase in levels of the endogenous osmoprotective compounds, galactinol and raffinose. This chain is Galactinol synthase 2 (GOLS2), found in Arabidopsis thaliana (Mouse-ear cress).